The primary structure comprises 624 residues: MQPEPKLSGAPRSSQFLPLWSKCPEGAGDAVMYASTECKAEVTPSQDGNRTFSYTLEDHTKQAFGVMNELRLSQQLCDVTLQVKYEDIPAAQFMAHKVVLASSSPVFKAMFTNGLREQGMEVVSIEGIHPKVMERLIEFAYTASISVGEKCVLHVMNGAVMYQIDSVVRACSDFLVQQLDPSNAIGIANFAEQIGCTELHQRAREYIYMHFGEVAKQEEFFNLSHCQLATLISRDDLNVRCESEVFHACIDWVKYDCPQRRFYVQALLRAVRCHALTPRFLQTQLQKCEILQADARCKDYLVQIFQELTLHKPTQAVPCRAPKVGRLIYTAGGYFRQSLSYLEAYNPSNGSWLRLADLQVPRSGLAGCVVGGLLYAVGGRNNSPDGNTDSSALDCYNPMTNQWSPCASMSVPRNRIGVGVIDGHIYAVGGSHGCIHHSSVERYEPERDEWHLVAPMLTRRIGVGVAVLNRLLYAVGGFDGTNRLNSAECYYPERNEWRMITPMNTIRSGAGVCVLHNCIYAAGGYDGQDQLNSVERYDVETETWTFVAPMRHHRSALGITVHQGKIYVLGGYDGHTFLDSVECYDPDSDTWSEVTRMTSGRSGVGVAVTMEPCRKQIDQQNCTC.

Cysteine 38 carries the post-translational modification S-(2-succinyl)cysteine. The BTB domain maps to 77 to 149; it reads CDVTLQVKYE…AYTASISVGE (73 aa). Arginine 135 participates in a covalent cross-link: N5-[4-(S-L-cysteinyl)-5-methyl-1H-imidazol-2-yl]-L-ornithine (Arg-Cys) (interchain with C-151 in KEAP1). S-(2,3-dicarboxypropyl)cysteine; alternate is present on cysteine 151. Cysteine 151 is subject to S-(2-succinyl)cysteine; alternate. Cysteine 151 carries the S-nitrosocysteine; alternate modification. Residue cysteine 151 forms an N5-[4-(S-L-cysteinyl)-5-methyl-1H-imidazol-2-yl]-L-ornithine (Cys-Arg) (interchain with R-135 in KEAP1) linkage. The region spanning 184–286 is the BACK domain; that stretch reads AIGIANFAEQ…TPRFLQTQLQ (103 aa). Cysteine 241 carries the post-translational modification S-(2-succinyl)cysteine. S-(2,3-dicarboxypropyl)cysteine occurs at positions 257 and 273. S-(2,3-dicarboxypropyl)cysteine; alternate is present on cysteine 288. An S-(2-succinyl)cysteine; alternate modification is found at cysteine 288. At cysteine 319 the chain carries S-(2-succinyl)cysteine. 6 Kelch repeats span residues 327–372, 373–423, 424–470, 471–517, 519–564, and 565–611; these read LIYT…VVGG, LLYA…VIDG, HIYA…VLNR, LLYA…VLHN, IYAA…VHQG, and KIYV…VTME. Residue cysteine 434 is modified to S-cGMP-cysteine. S-(2-succinyl)cysteine is present on cysteine 613.

Belongs to the KEAP1 family. Component of the BCR(KEAP1) E3 ubiquitin ligase complex, at least composed of 2 molecules of CUL3, 2 molecules of KEAP1, and RBX1. Interacts with NFE2L2/NRF2; the interaction is direct. Forms a ternary complex with NFE2L2/NRF2 and PGAM5. Interacts with (phosphorylated) SQSTM1/p62; the interaction is direct and inactivates the BCR(KEAP1) complex by sequestering it in inclusion bodies, promoting its degradation. Interacts with NFE2L1. Interacts with BPTF and PTMA. Interacts with MAP1LC3B. Interacts indirectly with ENC1. Interacts with SESN1 and SESN2. Interacts with HSP90AA1 and HSP90AB1. Interacts with PGCKA1; this interaction prevents the ubiquitination of KEAP1 by TRIM25, thus protecting KEAP1 from degradation. Non-enzymatic covalent modifications of reactive cysteines by electrophile metabolites inactivate the BCR(KEAP1) complex. Accumulation of fumarate promotes the formation of cysteine S-succination (S-(2-succinyl)cysteine), leading to inactivate the BCR(KEAP1) complex and promote NFE2L2/NRF2 nuclear accumulation and activation. Nitric oxide-dependent 8-Nitro-cGMP formation promotes cysteine guanylation (S-cGMP-cysteine), leading to NFE2L2/NRF2 nuclear accumulation and activation. Itaconate, an anti-inflammatory metabolite generated in response to lipopolysaccharide, alkylates cysteines, activating NFE2L2/NRF2. Methylglyoxal, a reactive metabolite that accumulates when the glycolytic enzyme PGK1 is inhibited, promotes formation of a methylimidazole cross-link between proximal Cys-151 and Arg-135 on another KEAP1 molecule, resulting in an inactive dimer that inactivates the BCR(KEAP1) complex. In terms of processing, degraded via a proteasomal-independent process during selective autophagy: interaction with phosphorylated SQSTM1/p62 sequesters KEAP1 in inclusion bodies, leading to its degradation. Post-translationally, auto-ubiquitinated by the BCR(KEAP1) complex. Quinone-induced oxidative stress, but not sulforaphane, increases its ubiquitination. Ubiquitination and subsequent degradation is most pronounced following prolonged exposure of cells to oxidative stress, particularly in glutathione-deficient cells that are highly susceptible to oxidative stress. Deubiquitinated by USP25; leading to stabilization. Ubiquitinated by TRIM25; leading to degradation upon ER stress.

It is found in the cytoplasm. It localises to the nucleus. It functions in the pathway protein modification; protein ubiquitination. Its activity is regulated as follows. Ubiquitin ligase activity of the BCR(KEAP1) complex is inhibited by oxidative stress and electrophile metabolites such as sulforaphane. Electrophile metabolites react with reactive cysteine residues in KEAP1 and trigger non-enzymatic covalent modifications of these cysteine residues, leading to inactivate the ubiquitin ligase activity of the BCR(KEAP1) complex. Selective autophagy also inactivates the BCR(KEAP1) complex via interaction between KEAP1 and SQSTM1/p62, which sequesters the complex in inclusion bodies and promotes its degradation. Substrate-specific adapter of a BCR (BTB-CUL3-RBX1) E3 ubiquitin ligase complex that regulates the response to oxidative stress by targeting NFE2L2/NRF2 for ubiquitination. KEAP1 acts as a key sensor of oxidative and electrophilic stress: in normal conditions, the BCR(KEAP1) complex mediates ubiquitination and degradation of NFE2L2/NRF2, a transcription factor regulating expression of many cytoprotective genes. In response to oxidative stress, different electrophile metabolites trigger non-enzymatic covalent modifications of highly reactive cysteine residues in KEAP1, leading to inactivate the ubiquitin ligase activity of the BCR(KEAP1) complex, promoting NFE2L2/NRF2 nuclear accumulation and expression of phase II detoxifying enzymes. In response to selective autophagy, KEAP1 is sequestered in inclusion bodies following its interaction with SQSTM1/p62, leading to inactivation of the BCR(KEAP1) complex and activation of NFE2L2/NRF2. The BCR(KEAP1) complex also mediates ubiquitination of SQSTM1/p62, increasing SQSTM1/p62 sequestering activity and degradation. The BCR(KEAP1) complex also targets BPTF and PGAM5 for ubiquitination and degradation by the proteasome. The protein is Kelch-like ECH-associated protein 1 of Mus musculus (Mouse).